The following is a 984-amino-acid chain: MRLLSFIYLVWLALLTGTPQVSATDNGKTSDVAWDKYSLSVKGERLFVFSGEFHYQRLPVPELWLDVFQKLRANGFNTISVYFFWSYHSASEDVFDFTTGAHDIQRLFDYAKQAGLYVIARAGPYCNAETSAGGFALWAANGQMGSERTSDEAYYKKWKPWILEVGKIIAANQITNGGPVILNQHENELQETTYDSNDTKVIYMEQVAKAFEEAGVVVPSSHNEKGMRTVSWSTDYKNVGGAVNVYGLDSYPGSLSCANPNSGFNLLRTYYQWFQNYSYTQPEYLAEFEGGWFQPWGGSFYDSCASELSPEFADVYYKNNIGSRVTLHNIYMTFGGTNWGHSAAPVVYTSYDYGSPLRETREIRDKLKQTKLLGLFTRVSKDLLKTYMEGNGTSYTSDDSIYTWALRNPDSDAGFYVVAHNTSSSREVTTFSLNITTSAGALTIPDIELDGRQSKIIVTDYSIGSESSLLYSSAEVLTYATLDVDVLVFYLNAGQKGAFVFKDAPADLKYQTYGNSNLSALETSQGTQYSYTQGEGVTAVKFSNGVLVYLLDKETAWNFFAPPTVSSPTVAPNEHILVFGPYLVRGASIKHDTVEIVGDNSNSTSIEIYTGDEHVKKVSWNGNLIDTRATAYGSLIGTVPGAEDIEISLPSLSSWKAQDTLPEISPDYDDSRWTICNKTTSVNSVAPLSLPVLYSGDYGYHTGTKIYRGRFDGQNATGANVTVQNGVAAGWAAWLNGAYVGGFSGDPDKVASWEVLKFNHSSLRSRDNVLTIITDYTGHDQNSQKPIGTQNPRGIMGATLIGGGNFTLWRIQGNAGGEKNIDPVRGPMNEGGLYGERMGWHLPGYQVPESALDSSPLEGVSGAEGRFYTTSFQLDLEEDLDVPIGLQLSAPAGTEAVVQIFMNGYQFGHYLPHIGPQSLFPFPPGVIYNRGQNSLAISMWALTDAGARLEQVELKAYAKYRSGFDFNRDWTYLQPGWKDRTEYA.

Positions 1–23 (MRLLSFIYLVWLALLTGTPQVSA) are cleaved as a signal peptide. Residues Tyr-82, Asn-127, Ala-128, Glu-129, and Asn-187 each coordinate substrate. Glu-188 serves as the catalytic Proton donor. A glycan (N-linked (GlcNAc...) asparagine) is linked at Asn-197. Tyr-251 lines the substrate pocket. Cysteines 257 and 304 form a disulfide. A glycan (N-linked (GlcNAc...) asparagine) is linked at Asn-276. The active-site Nucleophile is the Glu-287. Tyr-353 lines the substrate pocket. 10 N-linked (GlcNAc...) asparagine glycosylation sites follow: Asn-391, Asn-421, Asn-434, Asn-517, Asn-602, Asn-677, Asn-715, Asn-720, Asn-759, and Asn-805.

Belongs to the glycosyl hydrolase 35 family.

Its subcellular location is the secreted. The catalysed reaction is Hydrolysis of terminal non-reducing beta-D-galactose residues in beta-D-galactosides.. Cleaves beta-linked terminal galactosyl residues from gangliosides, glycoproteins, and glycosaminoglycans. The chain is Probable beta-galactosidase C (lacC) from Aspergillus flavus (strain ATCC 200026 / FGSC A1120 / IAM 13836 / NRRL 3357 / JCM 12722 / SRRC 167).